Here is a 346-residue protein sequence, read N- to C-terminus: Phosphoribosylformylglycinamidine cyclo-ligase (346 aa).

It belongs to the AIR synthase family.

It is found in the cytoplasm. It catalyses the reaction 2-formamido-N(1)-(5-O-phospho-beta-D-ribosyl)acetamidine + ATP = 5-amino-1-(5-phospho-beta-D-ribosyl)imidazole + ADP + phosphate + H(+). The protein operates within purine metabolism; IMP biosynthesis via de novo pathway; 5-amino-1-(5-phospho-D-ribosyl)imidazole from N(2)-formyl-N(1)-(5-phospho-D-ribosyl)glycinamide: step 2/2. The polypeptide is Phosphoribosylformylglycinamidine cyclo-ligase (Aliivibrio fischeri (strain ATCC 700601 / ES114) (Vibrio fischeri)).